A 1018-amino-acid chain; its full sequence is Importin-9 (1018 aa).

In terms of domain architecture, Importin N-terminal spans Thr35–Asp114. The interval Gly921–Ser950 is disordered. The span at Pro926 to Ala939 shows a compositional bias: acidic residues.

Belongs to the importin beta family.

It is found in the cytoplasm. The protein localises to the nucleus. Functionally, nuclear transport receptor that mediates nuclear import of proteins. Serves as receptor for nuclear localization signals (NLS) in cargo substrates. Is thought to mediate docking of the importin/substrate complex to the nuclear pore complex (NPC) through binding to nucleoporin and the complex is subsequently translocated through the pore by an energy requiring, Ran-dependent mechanism. Mediates the import of pre-assembled proteasomes into the nucleus during the late stages of sperm development. The protein is Importin-9 of Drosophila melanogaster (Fruit fly).